The sequence spans 249 residues: ATP synthase subunit a (249 aa).

6 helical membrane-spanning segments follow: residues 30 to 50 (SLYM…GSAG), 84 to 104 (FFPL…IGVI), 114 to 134 (LIVT…YGLY), 143 to 163 (VFVP…IEVI), 193 to 213 (FVTS…LPLA), and 220 to 240 (ILEV…TCIY).

It belongs to the ATPase A chain family. F-type ATPases have 2 components, CF(1) - the catalytic core - and CF(0) - the membrane proton channel. CF(1) has five subunits: alpha(3), beta(3), gamma(1), delta(1), epsilon(1). CF(0) has three main subunits: a(1), b(2) and c(9-12). The alpha and beta chains form an alternating ring which encloses part of the gamma chain. CF(1) is attached to CF(0) by a central stalk formed by the gamma and epsilon chains, while a peripheral stalk is formed by the delta and b chains.

It is found in the cell inner membrane. In terms of biological role, key component of the proton channel; it plays a direct role in the translocation of protons across the membrane. The chain is ATP synthase subunit a from Afipia carboxidovorans (strain ATCC 49405 / DSM 1227 / KCTC 32145 / OM5) (Oligotropha carboxidovorans).